Consider the following 144-residue polypeptide: Mannitol-specific phosphotransferase enzyme IIA component (144 aa).

A PTS EIIA type-2 domain is found at 3–142; it reads ELFSNDNIFL…EEIKQVFEEA (140 aa). H63 (tele-phosphohistidine intermediate) is an active-site residue. H63 is modified (phosphohistidine; by HPr).

Homodimer or homotrimer. Seems to be a monomer when not phosphorylated.

The protein resides in the cytoplasm. Functionally, the phosphoenolpyruvate-dependent sugar phosphotransferase system (sugar PTS), a major carbohydrate active transport system, catalyzes the phosphorylation of incoming sugar substrates concomitantly with their translocation across the cell membrane. The enzyme II CmtAB PTS system is involved in D-mannitol transport. In Staphylococcus aureus (strain COL), this protein is Mannitol-specific phosphotransferase enzyme IIA component (mtlF).